Reading from the N-terminus, the 211-residue chain is Protoglabretal synthase MOI1 (211 aa).

5 helical membrane-spanning segments follow: residues 16 to 36, 50 to 70, 104 to 124, 135 to 155, and 179 to 199; these read ASLHAWNGVSLLLIIFVTWII, LICWWALTGLIHVFQEGYYVF, VLGIESVASIVLGPLSLLAAY, IFQFAISIAQLYGTIQYFLTA, and IWVIVPMLIATRYWIKIHAIC. The EXPERA domain occupies 46–188; the sequence is IERLLICWWA…IWVIVPMLIA (143 aa).

The protein belongs to the EBP family. Expressed in maturing fruits and in juice vesicles.

Its subcellular location is the membrane. It catalyses the reaction 7,8-epoxymelianol = protoglabretal. Its pathway is secondary metabolite biosynthesis; terpenoid biosynthesis. Isomerase involved in the biosynthesis of glabretanes triterpene natural products such as glabretal, a component with in vitro antiproliferative properties on lymphocytes. Catalyzes the conversion of 7,8-epoxymelianol to protoglabretal via skeletal rearrangements. In Citrus sinensis (Sweet orange), this protein is Protoglabretal synthase MOI1.